The following is a 349-amino-acid chain: Isopentenyl-diphosphate delta-isomerase (349 aa).

Residue 6–7 (RK) coordinates substrate. FMN-binding positions include 62 to 64 (AMT), Ser93, and Asn122. Gln152 lines the substrate pocket. Mg(2+) is bound at residue Glu153. FMN is bound by residues Lys184, Thr214, 258–259 (GG), and 280–281 (AG).

The protein belongs to the IPP isomerase type 2 family. Homooctamer. Dimer of tetramers. The cofactor is FMN. NADPH serves as cofactor. Requires Mg(2+) as cofactor.

It is found in the cytoplasm. The catalysed reaction is isopentenyl diphosphate = dimethylallyl diphosphate. Functionally, involved in the biosynthesis of isoprenoids. Catalyzes the 1,3-allylic rearrangement of the homoallylic substrate isopentenyl (IPP) to its allylic isomer, dimethylallyl diphosphate (DMAPP). This chain is Isopentenyl-diphosphate delta-isomerase, found in Bacillus cytotoxicus (strain DSM 22905 / CIP 110041 / 391-98 / NVH 391-98).